Consider the following 211-residue polypeptide: ATP phosphoribosyltransferase (211 aa).

It belongs to the ATP phosphoribosyltransferase family. Short subfamily. As to quaternary structure, heteromultimer composed of HisG and HisZ subunits.

The protein localises to the cytoplasm. The enzyme catalyses 1-(5-phospho-beta-D-ribosyl)-ATP + diphosphate = 5-phospho-alpha-D-ribose 1-diphosphate + ATP. The protein operates within amino-acid biosynthesis; L-histidine biosynthesis; L-histidine from 5-phospho-alpha-D-ribose 1-diphosphate: step 1/9. Its function is as follows. Catalyzes the condensation of ATP and 5-phosphoribose 1-diphosphate to form N'-(5'-phosphoribosyl)-ATP (PR-ATP). Has a crucial role in the pathway because the rate of histidine biosynthesis seems to be controlled primarily by regulation of HisG enzymatic activity. This chain is ATP phosphoribosyltransferase, found in Pseudomonas entomophila (strain L48).